A 2256-amino-acid polypeptide reads, in one-letter code: Death-inducer obliterator 1 (2256 aa).

Position 1 is an N-acetylmethionine (M1). Basic and acidic residues predominate over residues 1–25 (MDDKGHLSNEEAPKAIKPTSKEFRK). The tract at residues 1–256 (MDDKGHLSNE…NPREAGKPKP (256 aa)) is disordered. 2 stretches are compositionally biased toward polar residues: residues 48 to 59 (SEQQPQQHNLSL) and 96 to 119 (EPTSSTVTDVETASEGSVESSSEI). Phosphoserine occurs at positions 58 and 112. Residues 128-142 (LGKEHPASSEKAKGG) are compositionally biased toward basic and acidic residues. A compositionally biased stretch (acidic residues) spans 143 to 153 (EEEEDTSDSDS). T148 is modified (phosphothreonine). Phosphoserine occurs at positions 149 and 151. 2 short sequence motifs (nuclear localization signal) span residues 162 to 170 (QNRLRRKRE) and 182 to 190 (QNRLRKKRR). The segment covering 169 to 178 (REQEPVERSL) has biased composition (basic and acidic residues). Composition is skewed to basic and acidic residues over residues 206–216 (EQDRPLCKQEP) and 246–256 (ENPREAGKPKP). The PHD-type zinc finger occupies 265–319 (ALYCICRQPHNNRFMICCDRCEEWFHGDCVGISEARGRLLERNGEDYICPNCTIL). 7 disordered regions span residues 481 to 535 (LASR…DDRR), 598 to 624 (RPWPSATLSGTSARQAGPTPMTAASKK), 641 to 668 (ANVPAASPAPGRLGPVSPAPSQPNSQIR), 778 to 822 (SRTK…PEKS), 856 to 970 (QVPS…TALS), 1011 to 1039 (AKPSSSPDPRYLSVPPSPSISESRSPPEG), and 1197 to 1218 (PSSAGELDKTDEKRTRLQQEEL). Residues 495-506 (ESSTPSWASDHN) are compositionally biased toward polar residues. S522 is subject to Phosphoserine. Residues 667-787 (IRQNIRRSLK…SRTKLLNESK (121 aa)) enclose the TFIIS central domain. The segment covering 778 to 788 (SRTKLLNESKK) has biased composition (basic and acidic residues). A compositionally biased stretch (acidic residues) spans 797 to 812 (PDMEDSPPVSDSEEQQ). 2 positions are modified to phosphoserine: S802 and S806. 2 stretches are compositionally biased toward basic and acidic residues: residues 875 to 886 (SKKEDFKPRHDS) and 921 to 935 (QERKCFPESPGDSHP). K876 is covalently cross-linked (Glycyl lysine isopeptide (Lys-Gly) (interchain with G-Cter in SUMO2)). S886 bears the Phosphoserine mark. The span at 937-962 (PSSLGGLSPSSASGGSGVVTTVTMSG) shows a compositional bias: low complexity. S1016, S1027, and S1035 each carry phosphoserine. Residues 1202-1215 (ELDKTDEKRTRLQQ) show a composition bias toward basic and acidic residues. Y1239 is modified (phosphotyrosine). The disordered stretch occupies residues 1245-1288 (DTAATSTTPPGSPPPPPPLPEPPVLKILSSLKPGSTSTVTAPTT). At T1252 the chain carries Phosphothreonine. Over residues 1254–1267 (PGSPPPPPPLPEPP) the composition is skewed to pro residues. The residue at position 1256 (S1256) is a Phosphoserine. Positions 1279 to 1288 (STSTVTAPTT) are enriched in low complexity. S1307 bears the Phosphoserine mark. Disordered stretches follow at residues 1320–1347 (KKSFEPSGKESVGSTLSPHQDSKAKGED), 1362–1421 (FGQF…VAYD), 1509–1609 (SDAL…EAKE), and 1630–2256 (QKCE…AAQA). Residues 1371–1387 (LEEEEEDDRPYDPEEEY) show a composition bias toward acidic residues. Residue S1514 is modified to Phosphoserine. Positions 1526–1546 (LFSQEQQAPDPSQGAPNTNHN) are enriched in polar residues. A compositionally biased stretch (basic and acidic residues) spans 1547–1557 (LDSRQSRDPRQ). Residues 1649–1666 (PTAGDGAARPAPPRRVLL) show a composition bias toward low complexity. The span at 1667–1679 (PTPPSTTFPPSFP) shows a compositional bias: pro residues. A compositionally biased stretch (polar residues) spans 1699–1712 (TFMSQETSLGSSQY). Residue S1726 is modified to Phosphoserine. Residues 1783-1792 (FPGPRGPVPP) show a composition bias toward pro residues. Residue R1848 is modified to Omega-N-methylarginine. The segment covering 1855–1869 (FEDRKDPHGEKREFQ) has biased composition (basic and acidic residues). An asymmetric dimethylarginine mark is found at R1904, R1905, R1988, R1993, R2004, R2019, and R2035. Basic and acidic residues-rich tracts occupy residues 2081-2113 (EFREGKGHEYRSPAFEGRQRERFEAGSKEKPLD) and 2123-2246 (RQGR…EART).

In terms of assembly, interacts specifically (via PHD-type zinc finger) with histone H3 that is trimethylated at 'Lys-4' (H3K4me3), histone phosphorylation at 'Thr-3' or 'Thr-6' disrupts this binding and promotes translocation of DIDO1 from chromatin to the mitotic spindle during mitosis. As to expression, ubiquitous. Expressed at intermediate levels.

The protein resides in the cytoplasm. It localises to the nucleus. Its subcellular location is the cytoskeleton. It is found in the spindle. Required for early embryonic stem cell development. Putative transcription factor, weakly pro-apoptotic when overexpressed. The protein is Death-inducer obliterator 1 (Dido1) of Mus musculus (Mouse).